The sequence spans 328 residues: Palmitoyltransferase ZDHHC15A (328 aa).

Residues 1–14 are Cytoplasmic-facing; the sequence is MLLPACLRRCARLL. Residues 15–35 form a helical membrane-spanning segment; the sequence is FWIPVLVVIVVVMWSYYAYVV. Over 36–48 the chain is Lumenal; the sequence is HFCWILLSSATQR. Residues 49-69 form a helical membrane-spanning segment; that stretch reads VVFLCLFHLCFGMFSWSFWKA. Residues 70–166 lie on the Cytoplasmic side of the membrane; the sequence is VSTPPSSPSV…NNCMGFSNYK (97 aa). Residues 123–173 form the DHHC domain; that stretch reads RFCHHCQLIKPDRCHHCSVCQTCVLKMDHHCLWLNNCMGFSNYKFFMLFLL. Positions 125 and 128 each coordinate Zn(2+). Residue lysine 132 coordinates substrate. Zn(2+)-binding residues include histidine 138, cysteine 139, cysteine 142, cysteine 145, and histidine 152. The active-site S-palmitoyl cysteine intermediate is cysteine 153. Cysteine 159 provides a ligand contact to Zn(2+). Residues 167–187 form a helical membrane-spanning segment; the sequence is FFMLFLLYSLLYCLLIVSTVT. Residues 188 to 206 lie on the Lumenal side of the membrane; it reads PTVIQLWRGRLFDSCVKLH. A helical transmembrane segment spans residues 207–227; the sequence is VLFLTLVSAIFAITLCFLLIF. Over 228-328 the chain is Cytoplasmic; the sequence is HIWLLTSNKT…KEAAVTIAVD (101 aa).

This sequence belongs to the DHHC palmitoyltransferase family. Autopalmitoylated (in vitro).

It is found in the golgi apparatus membrane. Its subcellular location is the postsynaptic density. The catalysed reaction is L-cysteinyl-[protein] + hexadecanoyl-CoA = S-hexadecanoyl-L-cysteinyl-[protein] + CoA. It catalyses the reaction L-cysteinyl-[protein] + tetradecanoyl-CoA = S-tetradecanoyl-L-cysteinyl-[protein] + CoA. It carries out the reaction L-cysteinyl-[protein] + octadecanoyl-CoA = S-octadecanoyl-L-cysteinyl-[protein] + CoA. Its function is as follows. Palmitoyltransferase that catalyzes the addition of palmitate onto various protein substrates. Has no stringent fatty acid selectivity and in addition to palmitate can also transfer onto target proteins myristate from tetradecanoyl-CoA and stearate from octadecanoyl-CoA. May thereby regulate target proteins association and localization to membranes. The protein is Palmitoyltransferase ZDHHC15A (zdhhc15a) of Danio rerio (Zebrafish).